The following is a 95-amino-acid chain: Signal recognition particle 19 kDa protein (95 aa).

Belongs to the SRP19 family. As to quaternary structure, part of the signal recognition particle protein translocation system, which is composed of SRP and FtsY. Archaeal SRP consists of a 7S RNA molecule of 300 nucleotides and two protein subunits: SRP54 and SRP19.

The protein localises to the cytoplasm. Functionally, involved in targeting and insertion of nascent membrane proteins into the cytoplasmic membrane. Binds directly to 7S RNA and mediates binding of the 54 kDa subunit of the SRP. The chain is Signal recognition particle 19 kDa protein from Desulfurococcus amylolyticus (strain DSM 18924 / JCM 16383 / VKM B-2413 / 1221n) (Desulfurococcus kamchatkensis).